An 87-amino-acid chain; its full sequence is Putative septation protein SpoVG (87 aa).

Belongs to the SpoVG family.

In terms of biological role, could be involved in septation. In Agathobacter rectalis (strain ATCC 33656 / DSM 3377 / JCM 17463 / KCTC 5835 / VPI 0990) (Eubacterium rectale), this protein is Putative septation protein SpoVG.